A 370-amino-acid chain; its full sequence is N-acyl-L-amino acid amidohydrolase (370 aa).

It belongs to the peptidase M20 family. As to quaternary structure, homotetramer. Co(2+) is required as a cofactor.

It catalyses the reaction an N-acyl-L-amino acid + H2O = an L-alpha-amino acid + a carboxylate. The catalysed reaction is an N-acetyl-L-cysteine-S-conjugate + H2O = an S-substituted L-cysteine + acetate. Functionally, hydrolyzes most efficiently N-acetyl derivatives of aromatic amino acids but is also active on other amino acids. L-stereospecific. The sequence is that of N-acyl-L-amino acid amidohydrolase (amaA) from Geobacillus stearothermophilus (Bacillus stearothermophilus).